Reading from the N-terminus, the 475-residue chain is Ammonium transporter 2 (475 aa).

Transmembrane regions (helical) follow at residues 27-47, 55-75, 120-140, 148-168, 183-203, 218-238, 254-274, 279-299, 302-322, 336-356, and 389-409; these read AATL…ASIV, SAFM…LLCY, LVYF…GSVL, WMAF…YSIW, GGYV…YWVG, VLLM…FNGG, TNLS…IFFG, IGAI…AGLI, WAAI…MMII, LAVF…TGLF, and AGAA…LLAI.

It belongs to the ammonia transporter channel (TC 1.A.11.2) family. Higher expression in shoots than roots.

The protein localises to the cell membrane. Functionally, high affinity ammonium transporter that may play an important role in moving ammonium between the apoplast and symplast of cells throughout the plant. Does not transport methylammonium. This is Ammonium transporter 2 (AMT2) from Arabidopsis thaliana (Mouse-ear cress).